Here is a 152-residue protein sequence, read N- to C-terminus: Maintenance of carboxysome distribution protein B (152 aa).

Self-associates, interacts with McdA probably via the C-terminus of both proteins. Homohexamerizes. Probably a trimer of dimers. Interacts with most of the shell components of the carboxysome (CcmK2, CcmK3, CcmK4, CcmL and CcmO, but not CcmP) via its C-terminus.

The protein localises to the carboxysome. McdA and McdB together mediate carboxysome (Cb) spacing, size, ultrastructure and probably inheritance in the cell. Together they prevent Cb aggregation. McdA is an ATPase that forms dynamic gradients on the nucleoid in response to adapter protein McdB, which associates with carboxysomes. The interplay between McdA gradients on the nucleoid and McdB-bound carboxysomes result in the equal spacing of Cbs along the cell length. McdB may have an additional function in cell divison. Stimulates the ATPase activity of McdA, causing McdA to be released from DNA. Overexpression leads to loss of McdA oscillation and formation of large Cb aggregates which colocalize with McdB, as well as diffuse McdB staining in the cytoplasm. Undergoes liquid-liquid phase separation between pH 6.5-7.5 and at concentrations between 1 uM and 167 uM. Forms polar foci upon overexpression in E.coli. In terms of biological role, incorrect positioning (aggregation) of carboxysomes results in reduced CO(2) fixation by encapsulated RuBisCO, which leads to slower growth, cell elongation, asymmetric cell division and an increase in RuBisCO levels. The sequence is that of Maintenance of carboxysome distribution protein B from Synechococcus elongatus (strain ATCC 33912 / PCC 7942 / FACHB-805) (Anacystis nidulans R2).